The chain runs to 421 residues: Enolase (421 aa).

Glutamine 165 serves as a coordination point for (2R)-2-phosphoglycerate. Residue glutamate 207 is the Proton donor of the active site. Residues aspartate 244, glutamate 285, and aspartate 312 each contribute to the Mg(2+) site. Lysine 337, arginine 366, serine 367, and lysine 388 together coordinate (2R)-2-phosphoglycerate. Lysine 337 (proton acceptor) is an active-site residue.

Belongs to the enolase family. Mg(2+) serves as cofactor.

The protein localises to the cytoplasm. It localises to the secreted. The protein resides in the cell surface. The enzyme catalyses (2R)-2-phosphoglycerate = phosphoenolpyruvate + H2O. It participates in carbohydrate degradation; glycolysis; pyruvate from D-glyceraldehyde 3-phosphate: step 4/5. In terms of biological role, catalyzes the reversible conversion of 2-phosphoglycerate (2-PG) into phosphoenolpyruvate (PEP). It is essential for the degradation of carbohydrates via glycolysis. This is Enolase from Ehrlichia chaffeensis (strain ATCC CRL-10679 / Arkansas).